Reading from the N-terminus, the 152-residue chain is UPF0266 membrane protein YobD (152 aa).

3 consecutive transmembrane segments (helical) span residues 6 to 26, 45 to 65, and 67 to 87; these read LVLI…QFIM, VDSV…VTSH, and AQMT…IFWI.

Belongs to the UPF0266 family.

It localises to the cell inner membrane. The chain is UPF0266 membrane protein YobD from Salmonella choleraesuis (strain SC-B67).